Consider the following 320-residue polypeptide: MVDNNKTVDNNYKHTSVLLDEAVNGLNIRDNGIYIDGTFGRGGHSRLILSQLGPEGRLIAIDRDPQAIEAAKSITDPRFSIVHGPFSDLAHYVRELNLVGRINGVLLDLGVSSPQLDDPERGFSFMRDGPLDMRMDPTRGISAAEWLMKASADDIAWVLKTFGEERFAKRLAKAIVERNLTQPMTRTKELADLIANASPFREKHKHPATRSFQAIRIYINSELEEIERALDGALEVLAPEGRLSVISFHSLEDRIVKNFIRHHSRGPQVPAGLPLTEAQLRSMGGRTLKSVGKMMPPDAEVAENPRARSSVLRFAERIKE.

Residues 42–44, aspartate 62, phenylalanine 86, aspartate 108, and glutamine 115 each bind S-adenosyl-L-methionine; that span reads GGH.

Belongs to the methyltransferase superfamily. RsmH family.

The protein resides in the cytoplasm. The catalysed reaction is cytidine(1402) in 16S rRNA + S-adenosyl-L-methionine = N(4)-methylcytidine(1402) in 16S rRNA + S-adenosyl-L-homocysteine + H(+). Functionally, specifically methylates the N4 position of cytidine in position 1402 (C1402) of 16S rRNA. In Yersinia enterocolitica serotype O:8 / biotype 1B (strain NCTC 13174 / 8081), this protein is Ribosomal RNA small subunit methyltransferase H.